The primary structure comprises 431 residues: Serine hydroxymethyltransferase (431 aa).

(6S)-5,6,7,8-tetrahydrofolate is bound at residue 122-124; that stretch reads GHI. Residue lysine 228 is modified to N6-(pyridoxal phosphate)lysine. Glutamate 245 is a binding site for (6S)-5,6,7,8-tetrahydrofolate.

Belongs to the SHMT family. In terms of assembly, homodimer. It depends on pyridoxal 5'-phosphate as a cofactor.

It localises to the cytoplasm. It participates in amino-acid biosynthesis; glycine biosynthesis; glycine from L-serine: step 1/1. Its function is as follows. Catalyzes the reversible interconversion of serine and glycine with a modified folate serving as the one-carbon carrier. Also exhibits a pteridine-independent aldolase activity toward beta-hydroxyamino acids, producing glycine and aldehydes, via a retro-aldol mechanism. The chain is Serine hydroxymethyltransferase from Thermococcus kodakarensis (strain ATCC BAA-918 / JCM 12380 / KOD1) (Pyrococcus kodakaraensis (strain KOD1)).